A 95-amino-acid chain; its full sequence is Protein TusB (95 aa).

Belongs to the DsrH/TusB family. In terms of assembly, heterohexamer, formed by a dimer of trimers. The hexameric TusBCD complex contains 2 copies each of TusB, TusC and TusD. The TusBCD complex interacts with TusE.

The protein localises to the cytoplasm. Its function is as follows. Part of a sulfur-relay system required for 2-thiolation of 5-methylaminomethyl-2-thiouridine (mnm(5)s(2)U) at tRNA wobble positions. The sequence is that of Protein TusB from Pectobacterium atrosepticum (strain SCRI 1043 / ATCC BAA-672) (Erwinia carotovora subsp. atroseptica).